Here is a 625-residue protein sequence, read N- to C-terminus: SWR1-complex protein 3 (625 aa).

Disordered regions lie at residues M1–N53, K194–K234, K254–P273, and N324–K434. The segment covering S20–R31 has biased composition (basic residues). Positions D35–N53 are enriched in acidic residues. Basic and acidic residues-rich tracts occupy residues K194 to R214 and I221 to K234. A compositionally biased stretch (polar residues) spans N261–M270. Basic and acidic residues predominate over residues K342–L352. Residues N353–A364 show a composition bias toward polar residues. Composition is skewed to basic and acidic residues over residues P368–T388 and D396–N420.

This sequence belongs to the SWC3 family. Component of the SWR1 chromatin remodeling complex composed of at least ACT1, ARP4, RVB1, RVB2, ARP6, YAF9, VPS71, VPS72, SWC3, SWC4, SWC5, SWC7 and SWR1, and perhaps BDF1.

It is found in the nucleus. In terms of biological role, component of the SWR1 complex which mediates the ATP-dependent exchange of histone H2A for the H2A variant HZT1 leading to transcriptional regulation of selected genes by chromatin remodeling. Involved in chromosome stability. In Saccharomyces cerevisiae (strain ATCC 204508 / S288c) (Baker's yeast), this protein is SWR1-complex protein 3 (SWC3).